Reading from the N-terminus, the 508-residue chain is Probable protein kinase UbiB (508 aa).

The Protein kinase domain occupies D118–L494. ATP contacts are provided by residues V124–V132 and K151. D286 (proton acceptor) is an active-site residue. Residues Q488 to L508 form a helical membrane-spanning segment.

It belongs to the ABC1 family. UbiB subfamily.

It localises to the cell inner membrane. Its pathway is cofactor biosynthesis; ubiquinone biosynthesis [regulation]. Its function is as follows. Is probably a protein kinase regulator of UbiI activity which is involved in aerobic coenzyme Q (ubiquinone) biosynthesis. The chain is Probable protein kinase UbiB from Chromobacterium violaceum (strain ATCC 12472 / DSM 30191 / JCM 1249 / CCUG 213 / NBRC 12614 / NCIMB 9131 / NCTC 9757 / MK).